The primary structure comprises 638 residues: NADH-ubiquinone oxidoreductase chain 5 (638 aa).

15 helical membrane-spanning segments follow: residues 7-27, 66-86, 112-132, 169-189, 203-223, 242-262, 275-295, 307-327, 335-354, 365-385, 404-424, 445-465, 487-507, 520-540, and 618-638; these read TIVS…IFFF, FAIS…LISV, FLLD…TWSI, LFLV…LISW, AVIY…LAVL, FVLF…AQFG, TPVS…FLLV, ANTI…STAI, IIAY…IGIG, THAF…HSLN, SACL…AGFY, LGIV…FFCF, ALLR…NFIF, GLPL…LSYL, and YIAS…IVLS.

It belongs to the complex I subunit 5 family.

It is found in the mitochondrion inner membrane. It carries out the reaction a ubiquinone + NADH + 5 H(+)(in) = a ubiquinol + NAD(+) + 4 H(+)(out). Core subunit of the mitochondrial membrane respiratory chain NADH dehydrogenase (Complex I) that is believed to belong to the minimal assembly required for catalysis. Complex I functions in the transfer of electrons from NADH to the respiratory chain. The immediate electron acceptor for the enzyme is believed to be ubiquinone. This chain is NADH-ubiquinone oxidoreductase chain 5 (ND5), found in Paracentrotus lividus (Common sea urchin).